A 299-amino-acid chain; its full sequence is Oxygen-dependent coproporphyrinogen-III oxidase (299 aa).

Residue Ser-92 coordinates substrate. Residues His-96 and His-106 each contribute to the Mn(2+) site. The Proton donor role is filled by His-106. Asn-108–Arg-110 lines the substrate pocket. Positions 145 and 175 each coordinate Mn(2+). The tract at residues Tyr-240–Glu-275 is important for dimerization. Gly-258 to Arg-260 is a substrate binding site.

The protein belongs to the aerobic coproporphyrinogen-III oxidase family. As to quaternary structure, homodimer. Requires Mn(2+) as cofactor.

It is found in the cytoplasm. It catalyses the reaction coproporphyrinogen III + O2 + 2 H(+) = protoporphyrinogen IX + 2 CO2 + 2 H2O. Its pathway is porphyrin-containing compound metabolism; protoporphyrin-IX biosynthesis; protoporphyrinogen-IX from coproporphyrinogen-III (O2 route): step 1/1. In terms of biological role, involved in the heme biosynthesis. Catalyzes the aerobic oxidative decarboxylation of propionate groups of rings A and B of coproporphyrinogen-III to yield the vinyl groups in protoporphyrinogen-IX. The sequence is that of Oxygen-dependent coproporphyrinogen-III oxidase from Escherichia coli O157:H7.